A 430-amino-acid polypeptide reads, in one-letter code: MREKYLLHCPGCGRLFPDNYTLDCPLGCNALLRTVYAEHRLTLRDLPGIFRYSSWLPIEGHLRIDAGPVSYASEGLARELGLSNLTVTFSGYWPERGGRMETCSFKELEAQPTVLRLGEKGAGVLQISSAGNTGRAFCQVSALTGAPVVVVVPASAADRLWTTVPAPNVCLITVEGDYSDSIAFGREVCSLPGIVPEGGAKNVARRDGMGTVMLDAALFAGRLPDAYFQAIGSGTGGIAAWEAAERLVADGRFGSRLPTLHLSQNLPFVPMVRAWEAGRREIVPEVDMPDAEASIVRVSADVLTNRHPPWEVRGGVYDALAASGGRMYAVANDDTRSAGRLFEATEEIDLDPAAAVAVASLIRAAEEGFIGPDDHILLNVTGGGYARAAEDLDRYPVEPYLRVRAGEAFAGDVRDAVRGWLAEQEVVVRA.

Lys-106 carries the N6-(pyridoxal phosphate)lysine modification. Asn-132 and Thr-381 together coordinate pyridoxal 5'-phosphate.

This sequence belongs to the threonine synthase family. Cysteate synthase subfamily. In terms of assembly, homotrimer. Pyridoxal 5'-phosphate serves as cofactor.

The catalysed reaction is O-phospho-L-serine + sulfite + H(+) = L-cysteate + phosphate. Its pathway is cofactor biosynthesis; coenzyme M biosynthesis. Functionally, specifically catalyzes the beta-elimination of phosphate from L-phosphoserine and the beta-addition of sulfite to the dehydroalanine intermediate to produce L-cysteate. This is Cysteate synthase from Methanoculleus marisnigri (strain ATCC 35101 / DSM 1498 / JR1).